Reading from the N-terminus, the 114-residue chain is Iron-sulfur cluster insertion protein ErpA (114 aa).

Iron-sulfur cluster-binding residues include Cys42, Cys106, and Cys108.

The protein belongs to the HesB/IscA family. Homodimer. Iron-sulfur cluster serves as cofactor.

Functionally, required for insertion of 4Fe-4S clusters for at least IspG. This chain is Iron-sulfur cluster insertion protein ErpA, found in Edwardsiella ictaluri (strain 93-146).